A 376-amino-acid chain; its full sequence is Coatomer subunit delta-4 (376 aa).

Positions 65 to 92 (LNTDTDTFTSRPKGRTSGGTTGAGKGIG) are disordered. A compositionally biased stretch (gly residues) spans 80 to 92 (TSGGTTGAGKGIG). The MHD domain maps to 134 to 376 (SDPVTVAVEE…RLVADNYQVV (243 aa)).

The protein belongs to the adaptor complexes medium subunit family. Delta-COP subfamily. As to quaternary structure, oligomeric complex that consists of at least the alpha, beta, beta', gamma, delta, epsilon and zeta subunits.

The protein localises to the cytoplasm. The protein resides in the golgi apparatus membrane. Its subcellular location is the cytoplasmic vesicle. It is found in the COPI-coated vesicle membrane. The coatomer is a cytosolic protein complex that binds to dilysine motifs and reversibly associates with Golgi non-clathrin-coated vesicles, which further mediate biosynthetic protein transport from the ER, via the Golgi up to the trans Golgi network. Coatomer complex is required for budding from Golgi membranes, and is essential for the retrograde Golgi-to-ER transport of dilysine-tagged proteins. The polypeptide is Coatomer subunit delta-4 (Oryza sativa subsp. japonica (Rice)).